A 597-amino-acid polypeptide reads, in one-letter code: MKYLLLALLLCLAVGTAGGFKIVKTCEKDPRGYIADLGNGKYLMHLEGSPYEMGYQHGCLKGAEVQSMTKEFVKSVLAGYDIPEDLIPGLLKLGKEVAKGNEKYVPSEFREEMRGIADGARDAGYDVDYDDVLLLNMGFDVILSIAYPIATPIVAWQDKKGVACDGFVAMDDATSDGRVLMGRSFMFNPEVFHEVALLIEQYPDRGHRFVSVSAPGFVGVTAAMSSAGIAIGMDMVPAMDTKPFVSGMGCLLTARQVVQYADELSDAVNMVKGSKRGVPWLYIVGDGKGREKGGAVLEVSADKFAVRYMDYRYPEWAESLDFPKQIEDKDDLVVVANHYIVPEMYSTISYAVKDSLWRYETLTGLILDSYGSIDVEKGKELIDYLHPPNYGYYGEDENVPVAATRTLFDLSNLELWSLYGMYTDPWAHWELTTEYQPAGLDKAWKDTEGDVAGPSWKPINYGAPIIDKEKMLDSADLQKLSEADGNYVEQCVKAYAGNPNYATIHLRFNVQSSANIMLTVADQNDGLEIYAWNYNTNDWQKVYDRIYPSGFTTLRLSLGSEFVNNRKADLVLISEAKWKFGMIYDKACVAVDAAAVT.

2 helical membrane passes run 4–23 and 209–231; these read LLLA…FKIV and FVSV…GIAI.

Its subcellular location is the cell membrane. This is an uncharacterized protein from Archaeoglobus fulgidus (strain ATCC 49558 / DSM 4304 / JCM 9628 / NBRC 100126 / VC-16).